The following is a 584-amino-acid chain: 2-succinyl-5-enolpyruvyl-6-hydroxy-3-cyclohexene-1-carboxylate synthase (584 aa).

This sequence belongs to the TPP enzyme family. MenD subfamily. In terms of assembly, homodimer. It depends on Mg(2+) as a cofactor. Mn(2+) is required as a cofactor. The cofactor is thiamine diphosphate.

The enzyme catalyses isochorismate + 2-oxoglutarate + H(+) = 5-enolpyruvoyl-6-hydroxy-2-succinyl-cyclohex-3-ene-1-carboxylate + CO2. The protein operates within quinol/quinone metabolism; 1,4-dihydroxy-2-naphthoate biosynthesis; 1,4-dihydroxy-2-naphthoate from chorismate: step 2/7. It functions in the pathway quinol/quinone metabolism; menaquinone biosynthesis. Functionally, catalyzes the thiamine diphosphate-dependent decarboxylation of 2-oxoglutarate and the subsequent addition of the resulting succinic semialdehyde-thiamine pyrophosphate anion to isochorismate to yield 2-succinyl-5-enolpyruvyl-6-hydroxy-3-cyclohexene-1-carboxylate (SEPHCHC). The chain is 2-succinyl-5-enolpyruvyl-6-hydroxy-3-cyclohexene-1-carboxylate synthase from Bacillus cereus (strain ATCC 10987 / NRS 248).